Here is a 399-residue protein sequence, read N- to C-terminus: CCA-adding enzyme (399 aa).

Residues G32 and R35 each coordinate ATP. Residues G32 and R35 each contribute to the CTP site. Mg(2+) is bound by residues D45 and D47. Residues R116, D159, R162, R165, and R168 each coordinate ATP. Residues R116, D159, R162, R165, and R168 each contribute to the CTP site.

It belongs to the tRNA nucleotidyltransferase/poly(A) polymerase family. Bacterial CCA-adding enzyme type 3 subfamily. As to quaternary structure, homodimer. Requires Mg(2+) as cofactor.

The enzyme catalyses a tRNA precursor + 2 CTP + ATP = a tRNA with a 3' CCA end + 3 diphosphate. The catalysed reaction is a tRNA with a 3' CCA end + 2 CTP + ATP = a tRNA with a 3' CCACCA end + 3 diphosphate. Catalyzes the addition and repair of the essential 3'-terminal CCA sequence in tRNAs without using a nucleic acid template. Adds these three nucleotides in the order of C, C, and A to the tRNA nucleotide-73, using CTP and ATP as substrates and producing inorganic pyrophosphate. tRNA 3'-terminal CCA addition is required both for tRNA processing and repair. Also involved in tRNA surveillance by mediating tandem CCA addition to generate a CCACCA at the 3' terminus of unstable tRNAs. While stable tRNAs receive only 3'-terminal CCA, unstable tRNAs are marked with CCACCA and rapidly degraded. This Streptococcus sanguinis (strain SK36) protein is CCA-adding enzyme.